Here is a 387-residue protein sequence, read N- to C-terminus: Formate-dependent phosphoribosylglycinamide formyltransferase (387 aa).

N(1)-(5-phospho-beta-D-ribosyl)glycinamide contacts are provided by residues 12–13 and E72; that span reads EL. Residues R104, K145, 150–155, 185–188, and E193 each bind ATP; these read SSGKGQ and EEFI. Residues 109 to 300 form the ATP-grasp domain; that stretch reads DLAAKDLKLL…EFELHIRAIL (192 aa). Mg(2+)-binding residues include E258 and E270. N(1)-(5-phospho-beta-D-ribosyl)glycinamide-binding positions include D277, K348, and 355 to 356; that span reads RR.

Belongs to the PurK/PurT family. As to quaternary structure, homodimer.

The catalysed reaction is N(1)-(5-phospho-beta-D-ribosyl)glycinamide + formate + ATP = N(2)-formyl-N(1)-(5-phospho-beta-D-ribosyl)glycinamide + ADP + phosphate + H(+). Its pathway is purine metabolism; IMP biosynthesis via de novo pathway; N(2)-formyl-N(1)-(5-phospho-D-ribosyl)glycinamide from N(1)-(5-phospho-D-ribosyl)glycinamide (formate route): step 1/1. Involved in the de novo purine biosynthesis. Catalyzes the transfer of formate to 5-phospho-ribosyl-glycinamide (GAR), producing 5-phospho-ribosyl-N-formylglycinamide (FGAR). Formate is provided by PurU via hydrolysis of 10-formyl-tetrahydrofolate. This chain is Formate-dependent phosphoribosylglycinamide formyltransferase, found in Leptospira borgpetersenii serovar Hardjo-bovis (strain JB197).